A 71-amino-acid polypeptide reads, in one-letter code: uncharacterized protein (71 aa).

Residues 1–16 are Cytoplasmic-facing; the sequence is MLLLYTVMILTCIIYK. A helical transmembrane segment spans residues 17 to 38; sequence LVPDNKYWPIHMFFFIMIYIVY. Topologically, residues 39–69 are extracellular; that stretch reads MYEKLDIHEKSQFWNYTMARLSGHPVPTIIC. A glycan (N-linked (GlcNAc...) asparagine; by host) is linked at asparagine 53.

The protein belongs to the asfivirus X69R family.

Its subcellular location is the host membrane. This is an uncharacterized protein from African swine fever virus (isolate Pig/Kenya/KEN-50/1950) (ASFV).